A 223-amino-acid polypeptide reads, in one-letter code: Phosphoribosylformylglycinamidine synthase subunit PurQ (223 aa).

The 220-residue stretch at 4-223 (KIGVITFPGT…FLSAIGTIAA (220 aa)) folds into the Glutamine amidotransferase type-1 domain. C87 serves as the catalytic Nucleophile. Catalysis depends on residues H195 and E197.

In terms of assembly, part of the FGAM synthase complex composed of 1 PurL, 1 PurQ and 2 PurS subunits.

It localises to the cytoplasm. It catalyses the reaction N(2)-formyl-N(1)-(5-phospho-beta-D-ribosyl)glycinamide + L-glutamine + ATP + H2O = 2-formamido-N(1)-(5-O-phospho-beta-D-ribosyl)acetamidine + L-glutamate + ADP + phosphate + H(+). The catalysed reaction is L-glutamine + H2O = L-glutamate + NH4(+). It participates in purine metabolism; IMP biosynthesis via de novo pathway; 5-amino-1-(5-phospho-D-ribosyl)imidazole from N(2)-formyl-N(1)-(5-phospho-D-ribosyl)glycinamide: step 1/2. In terms of biological role, part of the phosphoribosylformylglycinamidine synthase complex involved in the purines biosynthetic pathway. Catalyzes the ATP-dependent conversion of formylglycinamide ribonucleotide (FGAR) and glutamine to yield formylglycinamidine ribonucleotide (FGAM) and glutamate. The FGAM synthase complex is composed of three subunits. PurQ produces an ammonia molecule by converting glutamine to glutamate. PurL transfers the ammonia molecule to FGAR to form FGAM in an ATP-dependent manner. PurS interacts with PurQ and PurL and is thought to assist in the transfer of the ammonia molecule from PurQ to PurL. The protein is Phosphoribosylformylglycinamidine synthase subunit PurQ of Corynebacterium efficiens (strain DSM 44549 / YS-314 / AJ 12310 / JCM 11189 / NBRC 100395).